Consider the following 274-residue polypeptide: Diaminopimelate epimerase (274 aa).

Asparagine 11, glutamine 44, and asparagine 64 together coordinate substrate. The active-site Proton donor is the cysteine 73. Substrate is bound by residues 74–75 (GN), asparagine 157, asparagine 190, and 208–209 (ER). The active-site Proton acceptor is the cysteine 217. 218–219 (GS) provides a ligand contact to substrate.

This sequence belongs to the diaminopimelate epimerase family. In terms of assembly, homodimer.

The protein localises to the cytoplasm. It carries out the reaction (2S,6S)-2,6-diaminopimelate = meso-2,6-diaminopimelate. The protein operates within amino-acid biosynthesis; L-lysine biosynthesis via DAP pathway; DL-2,6-diaminopimelate from LL-2,6-diaminopimelate: step 1/1. Functionally, catalyzes the stereoinversion of LL-2,6-diaminopimelate (L,L-DAP) to meso-diaminopimelate (meso-DAP), a precursor of L-lysine and an essential component of the bacterial peptidoglycan. The sequence is that of Diaminopimelate epimerase from Cronobacter sakazakii (strain ATCC BAA-894) (Enterobacter sakazakii).